Consider the following 687-residue polypeptide: Epithelial splicing regulatory protein 1 (687 aa).

3 consecutive RRM domains span residues 226-303 (TIIR…KATG), 327-407 (VIVR…RSTA), and 446-526 (DCIR…QCSA).

Belongs to the ESRP family.

Its subcellular location is the nucleus. In terms of biological role, mRNA splicing factor that regulates the formation of epithelial cell-specific isoforms. Specifically regulates the expression of FGFR2-IIIb, an epithelial cell-specific isoform of fgfr2. Acts by directly binding specific sequences in mRNAs. Binds the GU-rich sequence motifs in the ISE/ISS-3, a cis-element regulatory region present in the mRNA of fgfr2. The polypeptide is Epithelial splicing regulatory protein 1 (esrp1) (Xenopus tropicalis (Western clawed frog)).